The primary structure comprises 266 residues: 4-hydroxy-tetrahydrodipicolinate reductase (266 aa).

Residues 8–13 (GAAGRM) and Glu33 contribute to the NAD(+) site. Arg34 contacts NADP(+). NAD(+) contacts are provided by residues 97–99 (GST) and 121–124 (APNM). His154 functions as the Proton donor/acceptor in the catalytic mechanism. Residue His155 participates in (S)-2,3,4,5-tetrahydrodipicolinate binding. The Proton donor role is filled by Lys158. Residue 164–165 (GT) coordinates (S)-2,3,4,5-tetrahydrodipicolinate.

Belongs to the DapB family.

It is found in the cytoplasm. It carries out the reaction (S)-2,3,4,5-tetrahydrodipicolinate + NAD(+) + H2O = (2S,4S)-4-hydroxy-2,3,4,5-tetrahydrodipicolinate + NADH + H(+). It catalyses the reaction (S)-2,3,4,5-tetrahydrodipicolinate + NADP(+) + H2O = (2S,4S)-4-hydroxy-2,3,4,5-tetrahydrodipicolinate + NADPH + H(+). It participates in amino-acid biosynthesis; L-lysine biosynthesis via DAP pathway; (S)-tetrahydrodipicolinate from L-aspartate: step 4/4. In terms of biological role, catalyzes the conversion of 4-hydroxy-tetrahydrodipicolinate (HTPA) to tetrahydrodipicolinate. The chain is 4-hydroxy-tetrahydrodipicolinate reductase from Geobacter metallireducens (strain ATCC 53774 / DSM 7210 / GS-15).